The primary structure comprises 315 residues: Peroxidase 4 (315 aa).

An N-terminal signal peptide occupies residues 1-19; the sequence is MAIFKILVLLLSLCCFSQA. The residue at position 20 (Gln20) is a Pyrrolidone carboxylic acid. 4 disulfides stabilise this stretch: Cys30/Cys110, Cys63/Cys68, Cys116/Cys311, and Cys195/Cys221. His61 acts as the Proton acceptor in catalysis. Asp62, Val65, Gly67, Asp69, and Ser71 together coordinate Ca(2+). Pro158 is a binding site for substrate. Position 188 (His188) interacts with heme b. Residue Thr189 coordinates Ca(2+). N-linked (GlcNAc...) asparagine glycosylation occurs at Asn205. Ca(2+) contacts are provided by Asp234, Thr237, and Asp242.

The protein belongs to the peroxidase family. Classical plant (class III) peroxidase subfamily. Requires heme b as cofactor. It depends on Ca(2+) as a cofactor.

The protein resides in the secreted. It carries out the reaction 2 a phenolic donor + H2O2 = 2 a phenolic radical donor + 2 H2O. Functionally, removal of H(2)O(2), oxidation of toxic reductants, biosynthesis and degradation of lignin, suberization, auxin catabolism, response to environmental stresses such as wounding, pathogen attack and oxidative stress. These functions might be dependent on each isozyme/isoform in each plant tissue. This chain is Peroxidase 4 (PER4), found in Arabidopsis thaliana (Mouse-ear cress).